The chain runs to 466 residues: 3-isopropylmalate dehydratase large subunit (466 aa).

Cys347, Cys407, and Cys410 together coordinate [4Fe-4S] cluster.

Belongs to the aconitase/IPM isomerase family. LeuC type 1 subfamily. As to quaternary structure, heterodimer of LeuC and LeuD. Requires [4Fe-4S] cluster as cofactor.

The enzyme catalyses (2R,3S)-3-isopropylmalate = (2S)-2-isopropylmalate. It functions in the pathway amino-acid biosynthesis; L-leucine biosynthesis; L-leucine from 3-methyl-2-oxobutanoate: step 2/4. In terms of biological role, catalyzes the isomerization between 2-isopropylmalate and 3-isopropylmalate, via the formation of 2-isopropylmaleate. This is 3-isopropylmalate dehydratase large subunit from Vibrio campbellii (strain ATCC BAA-1116).